The chain runs to 475 residues: Zinc finger protein 383 (475 aa).

The KRAB domain occupies 6–77 (VMFSDVSIDF…GRELTRGLCS (72 aa)). 11 consecutive C2H2-type zinc fingers follow at residues 170–192 (FECKKCGKAFSQNSQFIQHQRIH), 198–220 (YECKECGKFFSCGSHVTRHLKIH), 226–248 (FECKECGKAFSCSSYLSQHQRIH), 254–276 (YECKECGKAFSYCSNLIDHQRIH), 282–304 (YACKVCGKAFTKSSQLFQHVRIH), 310–332 (YECKECGKAFTQSSKLVQHQRIH), 338–360 (YECKECGKAFSSGSALTNHQRIH), 366–388 (YDCKECGKAFTQSSQLRQHQRIH), 394–416 (FECLECGKAFTQNSQLFQHQRIH), 422–444 (YECNECGKAFNKCSNLTRHLRIH), and 450–472 (YNCKECGKAFSSGSDLIRHQGIH).

This sequence belongs to the krueppel C2H2-type zinc-finger protein family.

The protein localises to the nucleus. Its subcellular location is the cytoplasm. May function as a transcriptional repressor, suppressing transcriptional activities mediated by MAPK signaling pathways. The sequence is that of Zinc finger protein 383 (ZNF383) from Macaca fascicularis (Crab-eating macaque).